The chain runs to 932 residues: Protocadherin gamma-A7 (932 aa).

A signal peptide spans 1-28; sequence MAAQPRGGDYRGFFLLSILLGTPWEAWA. 6 consecutive Cadherin domains span residues 29–133, 134–242, 243–347, 348–452, 453–562, and 570–682; these read GRIL…VPRF, LTEE…TPVF, SLPQ…APEV, TMTS…PPTF, PHSS…PPEI, and DGST…EPSD. The Extracellular portion of the chain corresponds to 29 to 692; the sequence is GRILYSVSEE…GPYNYDLTLY (664 aa). Asparagine 419 and asparagine 545 each carry an N-linked (GlcNAc...) asparagine glycan. Residues 693 to 713 form a helical membrane-spanning segment; it reads LVVAVATVSCVFLAFVLVLLA. The Cytoplasmic segment spans residues 714 to 932; that stretch reads LRLRRWHKSR…KKKSGKKEKK (219 aa). 2 disordered regions span residues 805–841 and 902–932; these read PSIQ…WPNN and ATLT…KEKK. The span at 922-932 shows a compositional bias: basic residues; sequence NKKKSGKKEKK.

It localises to the cell membrane. In terms of biological role, potential calcium-dependent cell-adhesion protein. May be involved in the establishment and maintenance of specific neuronal connections in the brain. The polypeptide is Protocadherin gamma-A7 (PCDHGA7) (Homo sapiens (Human)).